Here is a 408-residue protein sequence, read N- to C-terminus: Serine/threonine transporter SstT (408 aa).

Transmembrane regions (helical) follow at residues 14 to 34, 43 to 63, 83 to 103, 143 to 163, 181 to 201, 219 to 239, 247 to 269, 290 to 310, and 332 to 352; these read GNLILQICIGIVLGILIGIFS, IFGALFTGALKAIAPILVFIL, IIFLYIFGTFLASLSAVSISF, ALSSGNYLSILAWAIGGGFAL, VLKIVKFIVKLAPFGIFGLVA, LIILVLTMFFVAFVINALIVF, YPLIFICLKHSAVFAFFTRSSAA, ISIPLGATINMAGAAVTIAIL, and VLAAFAACGASGVAGGSLLLI.

The protein belongs to the dicarboxylate/amino acid:cation symporter (DAACS) (TC 2.A.23) family.

It localises to the cell inner membrane. It catalyses the reaction L-serine(in) + Na(+)(in) = L-serine(out) + Na(+)(out). The enzyme catalyses L-threonine(in) + Na(+)(in) = L-threonine(out) + Na(+)(out). In terms of biological role, involved in the import of serine and threonine into the cell, with the concomitant import of sodium (symport system). This chain is Serine/threonine transporter SstT, found in Campylobacter lari (strain RM2100 / D67 / ATCC BAA-1060).